The following is an 800-amino-acid chain: Chondroitin sulfate synthase 1 (800 aa).

At 1-7 (MAARGRR) the chain is on the cytoplasmic side. A helical; Signal-anchor for type II membrane protein membrane pass occupies residues 8 to 28 (AWLSMLLGLVLGFVLASRLVL). Residues 29-800 (PRASELKRVG…GGSHGSARTA (772 aa)) lie on the Lumenal side of the membrane. The segment at 36–66 (RVGPRRRPSPEGCRPGQEASQPGGARGDARG) is disordered. 2 N-linked (GlcNAc...) asparagine glycosylation sites follow: asparagine 188 and asparagine 622. Residues aspartate 632 and histidine 746 each contribute to the a divalent metal cation site.

The protein belongs to the chondroitin N-acetylgalactosaminyltransferase family. Co(2+) serves as cofactor. Mn(2+) is required as a cofactor. The cofactor is Cd(2+).

The protein resides in the golgi apparatus. Its subcellular location is the golgi stack membrane. The protein localises to the secreted. It catalyses the reaction 3-O-(beta-D-GlcA-(1-&gt;3)-beta-D-GalNAc-(1-&gt;4)-beta-D-GlcA-(1-&gt;3)-beta-D-Gal-(1-&gt;3)-beta-D-Gal-(1-&gt;4)-beta-D-Xyl)-L-seryl-[protein] + UDP-N-acetyl-alpha-D-galactosamine = 3-O-(beta-D-GalNAc-(1-&gt;4)-beta-D-GlcA-(1-&gt;3)-beta-D-GalNAc-(1-&gt;4)-beta-D-GlcA-(1-&gt;3)-beta-D-Gal-(1-&gt;3)-beta-D-Gal-(1-&gt;4)-beta-D-Xyl)-L-seryl-[protein] + UDP + H(+). The catalysed reaction is 3-O-{beta-D-GlcA-(1-&gt;3)-[beta-D-GalNAc-(1-&gt;4)-beta-D-GlcA-(1-&gt;3)](n)-beta-D-GalNAc-(1-&gt;4)-beta-D-GlcA-(1-&gt;3)-beta-D-Gal-(1-&gt;3)-beta-D-Gal-(1-&gt;4)-beta-D-Xyl}-L-seryl-[protein] + UDP-N-acetyl-alpha-D-galactosamine = 3-O-{[beta-D-GalNAc-(1-&gt;4)-beta-D-GlcA-(1-&gt;3)](n+1)-beta-D-GalNAc-(1-&gt;4)-beta-D-GlcA-(1-&gt;3)-beta-D-Gal-(1-&gt;3)-beta-D-Gal-(1-&gt;4)-beta-D-Xyl}-L-seryl-[protein] + UDP + H(+). It carries out the reaction 3-O-(beta-D-GalNAc-(1-&gt;4)-beta-D-GlcA-(1-&gt;3)-beta-D-Gal-(1-&gt;3)-beta-D-Gal-(1-&gt;4)-beta-D-Xyl)-L-seryl-[protein] + UDP-alpha-D-glucuronate = 3-O-(beta-D-GlcA-(1-&gt;3)-beta-D-GalNAc-(1-&gt;4)-beta-D-GlcA-(1-&gt;3)-beta-D-Gal-(1-&gt;3)-beta-D-Gal-(1-&gt;4)-beta-D-Xyl)-L-seryl-[protein] + UDP + H(+). The enzyme catalyses 3-O-{[beta-D-GalNAc-(1-&gt;4)-beta-D-GlcA-(1-&gt;3)](n)-beta-D-GalNAc-(1-&gt;4)-beta-D-GlcA-(1-&gt;3)-beta-D-Gal-(1-&gt;3)-beta-D-Gal-(1-&gt;4)-beta-D-Xyl}-L-seryl-[protein] + UDP-alpha-D-glucuronate = 3-O-{beta-D-GlcA-(1-&gt;3)-[beta-D-GalNAc-(1-&gt;4)-beta-D-GlcA-(1-&gt;3)](n)-beta-D-GalNAc-(1-&gt;4)-beta-D-GlcA-(1-&gt;3)-beta-D-Gal-(1-&gt;3)-beta-D-Gal-(1-&gt;4)-beta-D-Xyl}-L-seryl-[protein] + UDP + H(+). Its function is as follows. Has both beta-1,3-glucuronic acid and beta-1,4-N-acetylgalactosamine transferase activity. Transfers glucuronic acid (GlcUA) from UDP-GlcUA and N-acetylgalactosamine (GalNAc) from UDP-GalNAc to the non-reducing end of the elongating chondroitin polymer. Involved in the negative control of osteogenesis likely through the modulation of NOTCH signaling. This chain is Chondroitin sulfate synthase 1 (Chsy1), found in Mus musculus (Mouse).